Reading from the N-terminus, the 245-residue chain is Phycocyanobilin:ferredoxin oxidoreductase (245 aa).

This sequence belongs to the HY2 family.

The enzyme catalyses (2R,3Z)-phycocyanobilin + 4 oxidized [2Fe-2S]-[ferredoxin] = biliverdin IXalpha + 4 reduced [2Fe-2S]-[ferredoxin] + 4 H(+). In terms of biological role, catalyzes the four-electron reduction of biliverdin IX-alpha (2-electron reduction at both the A and D rings); the reaction proceeds via an isolatable 2-electron intermediate, 181,182-dihydrobiliverdin. This Trichodesmium erythraeum (strain IMS101) protein is Phycocyanobilin:ferredoxin oxidoreductase.